The primary structure comprises 634 residues: Chaperone protein HtpG (634 aa).

Residues 1–343 (MTEAENRVTL…SDSLPLNVSR (343 aa)) are a; substrate-binding. Positions 344-560 (EILQENKQLE…SYGMSRTMER (217 aa)) are b. The interval 561 to 634 (IMKSAGQNIP…KLNGLLQSLL (74 aa)) is c.

It belongs to the heat shock protein 90 family. Homodimer.

The protein resides in the cytoplasm. Molecular chaperone. Has ATPase activity. The chain is Chaperone protein HtpG from Methylococcus capsulatus (strain ATCC 33009 / NCIMB 11132 / Bath).